The following is a 549-amino-acid chain: Limonene dehydrogenase subunit B (549 aa).

It belongs to the carotenoid/retinoid oxidoreductase family. In terms of assembly, heterodimer composed of CtmA and CtmB. Requires FAD as cofactor.

It localises to the cytoplasm. It catalyses the reaction (4S)-limonene + A + H2O = (4S)-perillyl alcohol + AH2. It carries out the reaction (4R)-limonene + A + H2O = (4R)-perillyl alcohol + AH2. It participates in terpene metabolism; monoterpene degradation. The presence of molecular oxygen causes a 40% reduction in specific activity. Involved in the degradation of the cyclic monoterpene limonene. Catalyzes the oxidation of limonene at the primary methyl group, forming perillyl alcohol. Hydroxylates the R- and S-enantiomers to their respective enantiomeric form of perillyl alcohol at a similar rate. Native CtmAB oxidizes a wide range of monocyclic monoterpenes containing the allylic methyl group motif (1-methyl-cyclohex-1-ene). Can also catalyze the reverse reaction, the reduction of perillyl alcohol to limonene, but with lower efficiency. Cannot use molecular oxygen as an electron acceptor. The natural electron acceptor is likely a heterodimeric electron transfer flavoprotein (ETF). This Castellaniella defragrans (strain DSM 12143 / CCUG 39792 / 65Phen) (Alcaligenes defragrans) protein is Limonene dehydrogenase subunit B.